The primary structure comprises 291 residues: Bifunctional protein FolD (291 aa).

NADP(+)-binding positions include 168–170 (GRG), threonine 195, and isoleucine 236.

The protein belongs to the tetrahydrofolate dehydrogenase/cyclohydrolase family. Homodimer.

It carries out the reaction (6R)-5,10-methylene-5,6,7,8-tetrahydrofolate + NADP(+) = (6R)-5,10-methenyltetrahydrofolate + NADPH. The enzyme catalyses (6R)-5,10-methenyltetrahydrofolate + H2O = (6R)-10-formyltetrahydrofolate + H(+). It functions in the pathway one-carbon metabolism; tetrahydrofolate interconversion. In terms of biological role, catalyzes the oxidation of 5,10-methylenetetrahydrofolate to 5,10-methenyltetrahydrofolate and then the hydrolysis of 5,10-methenyltetrahydrofolate to 10-formyltetrahydrofolate. This Bifidobacterium longum subsp. infantis (strain ATCC 15697 / DSM 20088 / JCM 1222 / NCTC 11817 / S12) protein is Bifunctional protein FolD.